The primary structure comprises 184 residues: Chaperone protein YcdY (184 aa).

This sequence belongs to the TorD/DmsD family. As to quaternary structure, interacts with YcdX.

Its function is as follows. Acts as a chaperone that increases YcdX activity, maybe by facilitating the correct insertion of the zinc ions into the catalytic site of YcdX. Involved in the swarming motility process. In Escherichia coli (strain K12), this protein is Chaperone protein YcdY (ycdY).